The primary structure comprises 346 residues: Glucose-6-phosphatase 3 (346 aa).

At 1–25 the chain is on the lumenal side; sequence MESTLSAGIMMAEALQNQLPGLENM. Residues 26–46 form a helical membrane-spanning segment; that stretch reads WLWVTFLADPKNLFQFYFPAV. At 47 to 56 the chain is on the cytoplasmic side; it reads YYASRRLGIS. A helical transmembrane segment spans residues 57-77; the sequence is LFWIAFITEWLNLVFKWFLFG. Over 78–115 the chain is Lumenal; sequence DRPFWWVHESGYSAQTPVQIHQFPSSCETGPGSPSGHC. R79 lines the substrate pocket. H114 serves as the catalytic Proton donor. A helical transmembrane segment spans residues 116 to 135; sequence MITGAALWPVMIAISSQVAS. Residues 136–140 are Cytoplasmic-facing; the sequence is QTRSP. A helical transmembrane segment spans residues 141–162; the sequence is WVRVIPGLAYCTFLLAVGLSRV. R161 is a binding site for substrate. Residues 163–167 are Lumenal-facing; the sequence is FLLAH. Catalysis depends on H167, which acts as the Nucleophile. A helical membrane pass occupies residues 168 to 186; sequence FPHQVLAGLLAGVILGWLL. Topologically, residues 187 to 197 are cytoplasmic; sequence SPRVPMERELS. A helical transmembrane segment spans residues 198–218; that stretch reads FYGLTALTLMLGASLMYWTLF. Topologically, residues 219 to 254 are lumenal; it reads TLGLDLSWSINLASKWCDRPEWVLVDSRPFASLSRD. The helical transmembrane segment at 255–273 threads the bilayer; it reads SGSALGLGIALHTPCYAQI. The Cytoplasmic segment spans residues 274–283; sequence RRVHLGNGQK. Residues 284–304 traverse the membrane as a helical segment; it reads IACFVLAMGLLVFLEWLGHPP. Over 305–307 the chain is Lumenal; it reads QIS. A helical transmembrane segment spans residues 308–328; that stretch reads LFYIFNFLKFTLWPCLVVALV. The Cytoplasmic portion of the chain corresponds to 329-346; the sequence is PWMVHTLSAQEAPPIRSS.

It belongs to the glucose-6-phosphatase family. In terms of tissue distribution, expressed in liver and kidney. It is the major glucose-6-phosphatase expressed in the small intestine.

Its subcellular location is the endoplasmic reticulum membrane. The enzyme catalyses D-glucose 6-phosphate + H2O = D-glucose + phosphate. It functions in the pathway carbohydrate biosynthesis; gluconeogenesis. Inhibited by vanadate. Functionally, hydrolyzes glucose-6-phosphate to glucose in the endoplasmic reticulum. May form with the glucose-6-phosphate transporter (SLC37A4/G6PT) a ubiquitously expressed complex responsible for glucose production through glycogenolysis and gluconeogenesis. Probably required for normal neutrophil function. This Rattus norvegicus (Rat) protein is Glucose-6-phosphatase 3 (G6pc3).